The primary structure comprises 853 residues: Trimethylguanosine synthase (853 aa).

Residues 53 to 80 are disordered; it reads NNSGDQATEEEEGGYSCGTAESHDSKGI. Ser-55 is subject to Phosphoserine. Thr-60 carries the phosphothreonine modification. Phosphoserine occurs at positions 85, 89, 96, and 141. Tyr-146 carries the phosphotyrosine modification. The segment at 149–187 is disordered; sequence DDILASDDPSSIEQYENTRTYELQSKKDTETENPPVENT. Residue Ser-154 is modified to Phosphoserine. A compositionally biased stretch (polar residues) spans 156-171; that stretch reads DPSSIEQYENTRTYEL. Ser-189 carries the phosphoserine modification. Disordered regions lie at residues 334–461 and 527–632; these read SQLD…GGIP and DEEA…KKVN. Residues 367-382 are compositionally biased toward low complexity; sequence NGGTNEESNSSGNTNT. Ser-412, Ser-438, and Ser-578 each carry phosphoserine. Acidic residues predominate over residues 431–442; sequence DIDENPASDFDD. The segment covering 564 to 578 has biased composition (polar residues); it reads ETNNPEPEKCQSVSS. Residues 608-619 are compositionally biased toward basic and acidic residues; that stretch reads PDSRQAETEAEV. Basic residues predominate over residues 620–630; sequence KKKKNKKKNKK. A sufficient for catalytic activity region spans residues 631-846; the sequence is VNGLPPEIAA…TITAYFGDLI (216 aa). Asp-719 contributes to the S-adenosyl-L-methionine binding site. Trp-766 contributes to the N(7)-methylguanosine binding site.

It belongs to the methyltransferase superfamily. Trimethylguanosine synthase family. As to quaternary structure, may form homooligomers. Interacts with CREBBP/CBP, EED/WAIT1, EP300/P300, NCOA6/PRIP, PPARBP/PBP and SMN. In terms of tissue distribution, ubiquitously expressed. High expression in heart, skeletal muscle, kidney, liver and placenta.

Its subcellular location is the cytoplasm. It localises to the nucleus. The protein localises to the cajal body. The protein resides in the nucleolus. It carries out the reaction a 5'-end (N(7)-methyl 5'-triphosphoguanosine)-ribonucleoside in snRNA + S-adenosyl-L-methionine = a 5'-end (N(2),N(7)-dimethyl 5'-triphosphoguanosine)-ribonucleoside in snRNA + S-adenosyl-L-homocysteine + H(+). It catalyses the reaction a 5'-end (N(7)-methyl 5'-triphosphoguanosine)-ribonucleoside in snoRNA + S-adenosyl-L-methionine = a 5'-end (N(2),N(7)-dimethyl 5'-triphosphoguanosine)-ribonucleoside in snoRNA + S-adenosyl-L-homocysteine + H(+). The enzyme catalyses a 5'-end (N(2),N(7)-dimethyl 5'-triphosphoguanosine)-ribonucleoside in snRNA + S-adenosyl-L-methionine = a 5'-end (N(2),N(2),N(7)-trimethyl 5'-triphosphoguanosine)-ribonucleoside in snRNA + S-adenosyl-L-homocysteine + H(+). The catalysed reaction is a 5'-end (N(2),N(7)-dimethyl 5'-triphosphoguanosine)-ribonucleoside in snoRNA + S-adenosyl-L-methionine = a 5'-end (N(2),N(2),N(7)-trimethyl 5'-triphosphoguanosine)-ribonucleoside in snoRNA + S-adenosyl-L-homocysteine + H(+). Catalyzes the 2 serial methylation steps for the conversion of the 7-monomethylguanosine (m(7)G) caps of snRNAs and snoRNAs to a 2,2,7-trimethylguanosine (m(2,2,7)G) cap structure. The enzyme is specific for guanine, and N7 methylation must precede N2 methylation. Hypermethylation of the m7G cap of U snRNAs leads to their concentration in nuclear foci, their colocalization with coilin and the formation of canonical Cajal bodies (CBs). Plays a role in transcriptional regulation. The sequence is that of Trimethylguanosine synthase (TGS1) from Homo sapiens (Human).